Reading from the N-terminus, the 322-residue chain is Deoxyhypusine hydroxylase (322 aa).

HEAT-like PBS-type repeat units follow at residues leucine 76–aspartate 102, valine 109–glutamate 135, phenylalanine 234–arginine 260, and valine 267–aspartate 293. Residues histidine 78, glutamate 79, histidine 111, glutamate 112, histidine 236, glutamate 237, histidine 269, and glutamate 270 each contribute to the Fe cation site.

It belongs to the deoxyhypusine hydroxylase family. The cofactor is Fe(2+).

The protein resides in the cytoplasm. Its subcellular location is the nucleus. The catalysed reaction is [eIF5A protein]-deoxyhypusine + AH2 + O2 = [eIF5A protein]-hypusine + A + H2O. It functions in the pathway protein modification; eIF5A hypusination. In terms of biological role, catalyzes the hydroxylation of the N(6)-(4-aminobutyl)-L-lysine intermediate to form hypusine, an essential post-translational modification only found in mature eIF-5A factor. This is Deoxyhypusine hydroxylase from Eremothecium gossypii (strain ATCC 10895 / CBS 109.51 / FGSC 9923 / NRRL Y-1056) (Yeast).